The primary structure comprises 273 residues: Putative phosphoenolpyruvate synthase regulatory protein (273 aa).

Position 153 to 160 (153 to 160 (GVSRSGKT)) interacts with ADP.

This sequence belongs to the pyruvate, phosphate/water dikinase regulatory protein family. PSRP subfamily.

It carries out the reaction [pyruvate, water dikinase] + ADP = [pyruvate, water dikinase]-phosphate + AMP + H(+). The enzyme catalyses [pyruvate, water dikinase]-phosphate + phosphate + H(+) = [pyruvate, water dikinase] + diphosphate. In terms of biological role, bifunctional serine/threonine kinase and phosphorylase involved in the regulation of the phosphoenolpyruvate synthase (PEPS) by catalyzing its phosphorylation/dephosphorylation. The sequence is that of Putative phosphoenolpyruvate synthase regulatory protein from Delftia acidovorans (strain DSM 14801 / SPH-1).